The sequence spans 366 residues: tRNA/tmRNA (uracil-C(5))-methyltransferase (366 aa).

5 residues coordinate S-adenosyl-L-methionine: Gln-190, Tyr-218, Asn-223, Glu-239, and Asp-299. The Nucleophile role is filled by Cys-324. The active-site Proton acceptor is the Glu-358.

The protein belongs to the class I-like SAM-binding methyltransferase superfamily. RNA M5U methyltransferase family. TrmA subfamily.

The catalysed reaction is uridine(54) in tRNA + S-adenosyl-L-methionine = 5-methyluridine(54) in tRNA + S-adenosyl-L-homocysteine + H(+). The enzyme catalyses uridine(341) in tmRNA + S-adenosyl-L-methionine = 5-methyluridine(341) in tmRNA + S-adenosyl-L-homocysteine + H(+). Functionally, dual-specificity methyltransferase that catalyzes the formation of 5-methyluridine at position 54 (m5U54) in all tRNAs, and that of position 341 (m5U341) in tmRNA (transfer-mRNA). In Edwardsiella ictaluri (strain 93-146), this protein is tRNA/tmRNA (uracil-C(5))-methyltransferase.